Reading from the N-terminus, the 1072-residue chain is DNA-directed RNA polymerase subunit beta (1072 aa).

This sequence belongs to the RNA polymerase beta chain family. In plastids the minimal PEP RNA polymerase catalytic core is composed of four subunits: alpha, beta, beta', and beta''. When a (nuclear-encoded) sigma factor is associated with the core the holoenzyme is formed, which can initiate transcription.

The protein resides in the plastid. It is found in the chloroplast. The catalysed reaction is RNA(n) + a ribonucleoside 5'-triphosphate = RNA(n+1) + diphosphate. Its function is as follows. DNA-dependent RNA polymerase catalyzes the transcription of DNA into RNA using the four ribonucleoside triphosphates as substrates. In Lobularia maritima (Sweet alyssum), this protein is DNA-directed RNA polymerase subunit beta.